The sequence spans 736 residues: Replication restart protein PriA (736 aa).

The region spanning 230-396 (DFKGNISKEN…KEGRIRTFNF (167 aa)) is the Helicase ATP-binding domain. Position 243 to 250 (243 to 250 (GPTGSGKT)) interacts with ATP. The short motif at 339-342 (DEEH) is the DEAH box element. Positions 452, 455, 461, 464, 479, 482, 492, and 495 each coordinate Zn(2+). Residues 487–643 (GLVESCPRCG…EELERRKALG (157 aa)) form the Helicase C-terminal domain.

Belongs to the helicase family. PriA subfamily. In terms of assembly, component of the replication restart primosome. Zn(2+) is required as a cofactor.

The catalysed reaction is Couples ATP hydrolysis with the unwinding of duplex DNA by translocating in the 3'-5' direction.. The enzyme catalyses ATP + H2O = ADP + phosphate + H(+). In terms of biological role, initiates the restart of stalled replication forks, which reloads the replicative helicase on sites other than the origin of replication. Recognizes and binds to abandoned replication forks and remodels them to uncover a helicase loading site. Promotes assembly of the primosome at these replication forks. This Thermotoga maritima (strain ATCC 43589 / DSM 3109 / JCM 10099 / NBRC 100826 / MSB8) protein is Replication restart protein PriA.